A 559-amino-acid chain; its full sequence is 2-isopropylmalate synthase (559 aa).

The Pyruvate carboxyltransferase domain occupies 33-307 (PIWCSSDLRD…DPQLDFSDID (275 aa)). Residues Asp42, His246, His248, and Asn282 each coordinate Mg(2+). Residues 439 to 559 (ANTPYALVSH…SLSQQEAKAA (121 aa)) form a regulatory domain region.

It belongs to the alpha-IPM synthase/homocitrate synthase family. LeuA type 2 subfamily. In terms of assembly, homodimer. The cofactor is Mg(2+).

It localises to the cytoplasm. The enzyme catalyses 3-methyl-2-oxobutanoate + acetyl-CoA + H2O = (2S)-2-isopropylmalate + CoA + H(+). Its pathway is amino-acid biosynthesis; L-leucine biosynthesis; L-leucine from 3-methyl-2-oxobutanoate: step 1/4. Its function is as follows. Catalyzes the condensation of the acetyl group of acetyl-CoA with 3-methyl-2-oxobutanoate (2-ketoisovalerate) to form 3-carboxy-3-hydroxy-4-methylpentanoate (2-isopropylmalate). In Pseudomonas fluorescens (strain SBW25), this protein is 2-isopropylmalate synthase.